The following is a 435-amino-acid chain: GTPase Der (435 aa).

2 consecutive EngA-type G domains span residues 4–167 and 175–350; these read PTLA…PSED and IKFS…ENQT. GTP is bound by residues 10-17, 57-61, 119-122, 181-188, 228-232, and 293-296; these read GRPNVGKS, DTGGI, NKVD, DTAGI, and NKWD. The KH-like domain maps to 351–435; that stretch reads RRIQSSVLND…PIHIIARKRK (85 aa).

Belongs to the TRAFAC class TrmE-Era-EngA-EngB-Septin-like GTPase superfamily. EngA (Der) GTPase family. In terms of assembly, associates with the 50S ribosomal subunit.

In terms of biological role, GTPase that plays an essential role in the late steps of ribosome biogenesis. The protein is GTPase Der of Lacticaseibacillus casei (strain BL23) (Lactobacillus casei).